The chain runs to 534 residues: Cytochrome P450 monooxygenase vrtK (534 aa).

A heme-binding site is contributed by Cys448.

This sequence belongs to the cytochrome P450 family. The cofactor is heme.

The protein operates within secondary metabolite biosynthesis; terpenoid biosynthesis. Its function is as follows. Cytochrome P450 monooxygenase; part of the gene cluster that mediates the biosynthesis of viridicatumtoxin, a tetracycline-like fungal meroterpenoid with a unique, fused spirobicyclic ring system. The first step of the pathway is the production of the malonamoyl-CoA starter unit for the polyketide synthase vrtA. The aldolase vrtJ may be involved in the synthesis of the malonamate substrate for malonamoyl-CoA synthetase vrtB. The polyketide synthase vrtA then may utilize the malonamoyl-CoA starter unit, followed by sequential condensation of eight malonyl-CoA units to form the polyketide backbone. The cyclization of the last ring could be mediated by the lactamase-like protein vrtG. The proposed post-PKS tailoring steps are a hydroxylation at C5 catalyzed the cytochrome P450 monooxygenase vrtE, a hydroxylation at C12a catalyzed by VrtH and/or VrtI, and an O-methylation by the O-methyltransferase vrtF. VrtC is then proposed to catalyze the transfer of a geranyl group synthesized by vrtD to the aromatic C ring of the tetracyclic polyketide intermediate of viridicatumtoxin to yield previridicatumtoxin. Finally, the cytochrome P450 monooxygenase vrtK catalyzes the spirocyclization of the geranyl moiety of previridicatumtoxin to afford viridicatumtoxin. The polypeptide is Cytochrome P450 monooxygenase vrtK (Penicillium aethiopicum).